The following is a 164-amino-acid chain: UPF0304 protein YfbU (164 aa).

This sequence belongs to the UPF0304 family.

This Escherichia coli O6:H1 (strain CFT073 / ATCC 700928 / UPEC) protein is UPF0304 protein YfbU (yfbU).